The following is a 417-amino-acid chain: Serine--tRNA ligase (417 aa).

232–234 (TAE) is a binding site for L-serine. An ATP-binding site is contributed by 263 to 265 (RKE). Glu-286 is a binding site for L-serine. 350–353 (EISS) is an ATP binding site. Ser-385 is a binding site for L-serine.

The protein belongs to the class-II aminoacyl-tRNA synthetase family. Type-1 seryl-tRNA synthetase subfamily. As to quaternary structure, homodimer. The tRNA molecule binds across the dimer.

The protein resides in the cytoplasm. The catalysed reaction is tRNA(Ser) + L-serine + ATP = L-seryl-tRNA(Ser) + AMP + diphosphate + H(+). The enzyme catalyses tRNA(Sec) + L-serine + ATP = L-seryl-tRNA(Sec) + AMP + diphosphate + H(+). It functions in the pathway aminoacyl-tRNA biosynthesis; selenocysteinyl-tRNA(Sec) biosynthesis; L-seryl-tRNA(Sec) from L-serine and tRNA(Sec): step 1/1. Catalyzes the attachment of serine to tRNA(Ser). Is also able to aminoacylate tRNA(Sec) with serine, to form the misacylated tRNA L-seryl-tRNA(Sec), which will be further converted into selenocysteinyl-tRNA(Sec). This Sulfurihydrogenibium sp. (strain YO3AOP1) protein is Serine--tRNA ligase.